Reading from the N-terminus, the 199-residue chain is Glycerol-3-phosphate acyltransferase (199 aa).

Transmembrane regions (helical) follow at residues 5-25, 54-74, 82-102, 114-134, and 154-174; these read AYLL…IIFC, AAIG…LIAF, AIGL…FFQF, VFFS…LIVF, and YIWC…CLLI.

Belongs to the PlsY family. Probably interacts with PlsX.

It localises to the cell inner membrane. The catalysed reaction is an acyl phosphate + sn-glycerol 3-phosphate = a 1-acyl-sn-glycero-3-phosphate + phosphate. The protein operates within lipid metabolism; phospholipid metabolism. Catalyzes the transfer of an acyl group from acyl-phosphate (acyl-PO(4)) to glycerol-3-phosphate (G3P) to form lysophosphatidic acid (LPA). This enzyme utilizes acyl-phosphate as fatty acyl donor, but not acyl-CoA or acyl-ACP. The sequence is that of Glycerol-3-phosphate acyltransferase from Haemophilus ducreyi (strain 35000HP / ATCC 700724).